Consider the following 445-residue polypeptide: Putative U-box domain-containing protein 47 (445 aa).

In terms of domain architecture, U-box spans 64-137; sequence EVPKEFICTL…KEWCLIHNFD (74 aa).

It carries out the reaction S-ubiquitinyl-[E2 ubiquitin-conjugating enzyme]-L-cysteine + [acceptor protein]-L-lysine = [E2 ubiquitin-conjugating enzyme]-L-cysteine + N(6)-ubiquitinyl-[acceptor protein]-L-lysine.. The protein operates within protein modification; protein ubiquitination. Functionally, functions as an E3 ubiquitin ligase. This chain is Putative U-box domain-containing protein 47 (PUB47), found in Arabidopsis thaliana (Mouse-ear cress).